Here is a 103-residue protein sequence, read N- to C-terminus: Large ribosomal subunit protein bL21 (103 aa).

Belongs to the bacterial ribosomal protein bL21 family. As to quaternary structure, part of the 50S ribosomal subunit. Contacts protein L20.

In terms of biological role, this protein binds to 23S rRNA in the presence of protein L20. This Desulfotalea psychrophila (strain LSv54 / DSM 12343) protein is Large ribosomal subunit protein bL21.